Reading from the N-terminus, the 921-residue chain is Isoleucine--tRNA ligase (921 aa).

Residues 57–67 carry the 'HIGH' region motif; the sequence is PYANGDIHMGH. Glu552 is a binding site for L-isoleucyl-5'-AMP. The short motif at 593–597 is the 'KMSKS' region element; it reads KMSKS. Lys596 contacts ATP. 4 residues coordinate Zn(2+): Cys888, Cys891, Cys908, and Cys911.

It belongs to the class-I aminoacyl-tRNA synthetase family. IleS type 1 subfamily. Monomer. Zn(2+) is required as a cofactor.

It is found in the cytoplasm. It catalyses the reaction tRNA(Ile) + L-isoleucine + ATP = L-isoleucyl-tRNA(Ile) + AMP + diphosphate. Its function is as follows. Catalyzes the attachment of isoleucine to tRNA(Ile). As IleRS can inadvertently accommodate and process structurally similar amino acids such as valine, to avoid such errors it has two additional distinct tRNA(Ile)-dependent editing activities. One activity is designated as 'pretransfer' editing and involves the hydrolysis of activated Val-AMP. The other activity is designated 'posttransfer' editing and involves deacylation of mischarged Val-tRNA(Ile). The protein is Isoleucine--tRNA ligase of Bacillus cereus (strain 03BB102).